Reading from the N-terminus, the 735-residue chain is Peroxisomal multifunctional enzyme type 2 (735 aa).

The interval 1 to 305 (MASPLRFDGR…IEVLHKIDSE (305 aa)) is (3R)-hydroxyacyl-CoA dehydrogenase. Residues 16–40 (GAGG…VVND), L21, and D40 contribute to the NAD(+) site. The residue at position 46 (K46) is an N6-acetyllysine; alternate. Residue K46 is modified to N6-succinyllysine; alternate. S52 is subject to Phosphoserine. K57 and K68 each carry N6-succinyllysine. NAD(+) is bound at residue 75–76 (SV). At K84 the chain carries N6-succinyllysine. NAD(+) is bound at residue N99. S151 provides a ligand contact to substrate. Y164 acts as the Proton acceptor in catalysis. Residues 164–168 (YSAAK) and 196–199 (AGSR) contribute to the NAD(+) site. T265 carries the post-translational modification Phosphothreonine. K275 bears the N6-succinyllysine mark. S304 and S308 each carry phosphoserine. The interval 321–621 (SGFAGVVGHK…AQTPSEGGAL (301 aa)) is enoyl-CoA hydratase 2. Residue K355 is modified to N6-succinyllysine. 405–406 (HG) is a binding site for (3R)-3-hydroxydecanoyl-CoA. The residue at position 423 (K423) is an N6-succinyllysine. (3R)-3-hydroxydecanoyl-CoA contacts are provided by residues K434, 509 to 514 (DSNPLH), G532, and F562. One can recognise a MaoC-like domain in the interval 483-599 (VPSRPPDAVL…QETGDIVISN (117 aa)). K564 is subject to N6-acetyllysine. K578 and K662 each carry N6-succinyllysine. Residues 623–735 (SALVFGEIGR…QMILKDYAKL (113 aa)) form the SCP2 domain. K668 carries the N6-acetyllysine modification. Residues Q705 and Q723 each contribute to the substrate site. The residue at position 724 (K724) is an N6-succinyllysine. The Microbody targeting signal signature appears at 733–735 (AKL).

It belongs to the short-chain dehydrogenases/reductases (SDR) family. In terms of assembly, homodimer.

Its subcellular location is the peroxisome. It carries out the reaction a (3R)-3-hydroxyacyl-CoA + NAD(+) = a 3-oxoacyl-CoA + NADH + H(+). The catalysed reaction is (24R,25R)-3alpha,7alpha,12alpha,24-tetrahydroxy-5beta-cholestan-26-oyl-CoA = (24E)-3alpha,7alpha,12alpha-trihydroxy-5beta-cholest-24-en-26-oyl-CoA + H2O. The enzyme catalyses a (3R)-3-hydroxyacyl-CoA = a (2E)-enoyl-CoA + H2O. It catalyses the reaction (2E)-octenoyl-CoA + H2O = (3R)-hydroxyoctanoyl-CoA. It carries out the reaction (3R)-hydroxyoctanoyl-CoA + NAD(+) = 3-oxooctanoyl-CoA + NADH + H(+). The catalysed reaction is (3R)-hydroxyhexadecanoyl-CoA + NAD(+) = 3-oxohexadecanoyl-CoA + NADH + H(+). The enzyme catalyses (2E)-hexadecenedioyl-CoA + H2O = (3R)-hydroxyhexadecanedioyl-CoA. It catalyses the reaction (3R)-hydroxyhexadecanedioyl-CoA + NAD(+) = 3-oxohexadecanedioyl-CoA + NADH + H(+). It carries out the reaction (3R)-hydroxyhexadecanoyl-CoA = (2E)-hexadecenoyl-CoA + H2O. The catalysed reaction is (3R)-3-hydroxydecanoyl-CoA = (2E)-decenoyl-CoA + H2O. The enzyme catalyses (3R)-3-hydroxydecanoyl-CoA + NAD(+) = 3-oxodecanoyl-CoA + NADH + H(+). It catalyses the reaction (24R,25R)-3alpha,7alpha,12alpha,24-tetrahydroxy-5beta-cholestan-26-oyl-CoA + NAD(+) = 3alpha,7alpha,12alpha-trihydroxy-24-oxo-5beta-cholestan-26-oyl-CoA + NADH + H(+). It participates in lipid metabolism; fatty acid beta-oxidation. Bifunctional enzyme acting on the peroxisomal fatty acid beta-oxidation pathway. Catalyzes two of the four reactions in fatty acid degradation: hydration of 2-enoyl-CoA (trans-2-enoyl-CoA) to produce (3R)-3-hydroxyacyl-CoA, and dehydrogenation of (3R)-3-hydroxyacyl-CoA to produce 3-ketoacyl-CoA (3-oxoacyl-CoA), which is further metabolized by SCPx. Can use straight-chain and branched-chain fatty acids, as well as bile acid intermediates as substrates. This Rattus norvegicus (Rat) protein is Peroxisomal multifunctional enzyme type 2.